Here is a 448-residue protein sequence, read N- to C-terminus: uncharacterized protein (448 aa).

Residues 187–198 (SKGDRGDADDRG) are compositionally biased toward basic and acidic residues. Disordered regions lie at residues 187 to 221 (SKGD…LPTR), 243 to 270 (LQVP…GATM), and 291 to 361 (LSGL…LPNG). Residues 243 to 261 (LQVPGGTSAAIPSASSTPS) are compositionally biased toward low complexity. The span at 307 to 334 (FDERGQEVRDPADYEHANEPDERRADDR) shows a compositional bias: basic and acidic residues.

It to M.tuberculosis Rv0025 and Rv0739.

This is an uncharacterized protein from Mycobacterium tuberculosis (strain CDC 1551 / Oshkosh).